We begin with the raw amino-acid sequence, 77 residues long: Large ribosomal subunit protein bL28 (77 aa).

The protein belongs to the bacterial ribosomal protein bL28 family.

This is Large ribosomal subunit protein bL28 from Methylibium petroleiphilum (strain ATCC BAA-1232 / LMG 22953 / PM1).